Consider the following 522-residue polypeptide: Penicillin-sensitive carboxypeptidase A (522 aa).

The active-site Acyl-ester intermediate is serine 94. The active-site Proton acceptor is the lysine 97. The active site involves serine 351. Residue lysine 461 participates in substrate binding.

This sequence belongs to the peptidase S13 family.

The catalysed reaction is Preferential cleavage: (Ac)2-L-Lys-D-Ala-|-D-Ala. Also transpeptidation of peptidyl-alanyl moieties that are N-acyl substituents of D-alanine.. With respect to regulation, inhibited by penicillin G. Its function is as follows. Carboxypeptidase. This Dictyostelium discoideum (Social amoeba) protein is Penicillin-sensitive carboxypeptidase A (pscA).